The following is a 156-amino-acid chain: Small ribosomal subunit protein uS7 (156 aa).

This sequence belongs to the universal ribosomal protein uS7 family. In terms of assembly, part of the 30S ribosomal subunit. Contacts proteins S9 and S11.

Its function is as follows. One of the primary rRNA binding proteins, it binds directly to 16S rRNA where it nucleates assembly of the head domain of the 30S subunit. Is located at the subunit interface close to the decoding center, probably blocks exit of the E-site tRNA. This Sinorhizobium medicae (strain WSM419) (Ensifer medicae) protein is Small ribosomal subunit protein uS7.